We begin with the raw amino-acid sequence, 467 residues long: 3-isopropylmalate dehydratase large subunit (467 aa).

[4Fe-4S] cluster is bound by residues Cys347, Cys407, and Cys410.

This sequence belongs to the aconitase/IPM isomerase family. LeuC type 1 subfamily. In terms of assembly, heterodimer of LeuC and LeuD. The cofactor is [4Fe-4S] cluster.

The enzyme catalyses (2R,3S)-3-isopropylmalate = (2S)-2-isopropylmalate. The protein operates within amino-acid biosynthesis; L-leucine biosynthesis; L-leucine from 3-methyl-2-oxobutanoate: step 2/4. Catalyzes the isomerization between 2-isopropylmalate and 3-isopropylmalate, via the formation of 2-isopropylmaleate. This is 3-isopropylmalate dehydratase large subunit from Prochlorococcus marinus (strain MIT 9301).